The chain runs to 124 residues: Large ribosomal subunit protein bL12 (124 aa).

Belongs to the bacterial ribosomal protein bL12 family. In terms of assembly, homodimer. Part of the ribosomal stalk of the 50S ribosomal subunit. Forms a multimeric L10(L12)X complex, where L10 forms an elongated spine to which 2 to 4 L12 dimers bind in a sequential fashion. Binds GTP-bound translation factors.

Its function is as follows. Forms part of the ribosomal stalk which helps the ribosome interact with GTP-bound translation factors. Is thus essential for accurate translation. This Burkholderia ambifaria (strain MC40-6) protein is Large ribosomal subunit protein bL12.